Consider the following 136-residue polypeptide: Translation initiation factor 5A (136 aa).

Residue Lys-36 is modified to Hypusine.

The protein belongs to the eIF-5A family.

Its subcellular location is the cytoplasm. Its function is as follows. Functions by promoting the formation of the first peptide bond. In Hyperthermus butylicus (strain DSM 5456 / JCM 9403 / PLM1-5), this protein is Translation initiation factor 5A (eIF5A).